The primary structure comprises 427 residues: Trigger factor (427 aa).

The PPIase FKBP-type domain occupies 163-248 (GDTVVIDFVG…IHEVKAKEVP (86 aa)).

Belongs to the FKBP-type PPIase family. Tig subfamily.

The protein resides in the cytoplasm. The catalysed reaction is [protein]-peptidylproline (omega=180) = [protein]-peptidylproline (omega=0). Involved in protein export. Acts as a chaperone by maintaining the newly synthesized protein in an open conformation. Functions as a peptidyl-prolyl cis-trans isomerase. This is Trigger factor from Streptococcus pneumoniae (strain Hungary19A-6).